We begin with the raw amino-acid sequence, 476 residues long: Cysteine--tRNA ligase (476 aa).

A Zn(2+)-binding site is contributed by cysteine 27. Residues 29–39 carry the 'HIGH' region motif; that stretch reads PTTYNYIHLGN. The Zn(2+) site is built by cysteine 207, histidine 232, and glutamate 236. The 'KMSKS' region signature appears at 264–268; it reads KMSKS. Lysine 267 serves as a coordination point for ATP.

This sequence belongs to the class-I aminoacyl-tRNA synthetase family. In terms of assembly, monomer. It depends on Zn(2+) as a cofactor.

Its subcellular location is the cytoplasm. The enzyme catalyses tRNA(Cys) + L-cysteine + ATP = L-cysteinyl-tRNA(Cys) + AMP + diphosphate. In Moorella thermoacetica (strain ATCC 39073 / JCM 9320), this protein is Cysteine--tRNA ligase.